A 573-amino-acid chain; its full sequence is Estrogen receptor beta (573 aa).

The tract at residues 15-170 is modulating; that stretch reads QEVDSSKVGE…CFAGKGDMHF (156 aa). NR C4-type zinc fingers lie at residues 171 to 191 and 207 to 231; these read CAVC…CEGC and CPAT…LRKC. A DNA-binding region (nuclear receptor) is located at residues 171-236; sequence CAVCHDYASG…RLRKCYEVGM (66 aa). The 237-residue stretch at 291 to 527 folds into the NR LBD domain; that stretch reads TPEQLINRII…DLLLEMLDAN (237 aa). 2 stretches are compositionally biased toward low complexity: residues 534-552 and 559-573; these read MSAS…AQSQ and CSGE…SSTI. Residues 534–573 form a disordered region; sequence MSASYSSQPSPWSQAAQSQPGPPPSCSGECPCPPKESSTI.

This sequence belongs to the nuclear hormone receptor family. NR3 subfamily. Binds DNA as a homodimer. Can form a heterodimer with ER-alpha. In terms of tissue distribution, liver.

Its subcellular location is the nucleus. Functionally, binds estrogens with an affinity similar to that of ER-alpha, and activates expression of reporter genes containing estrogen response elements (ERE) in an estrogen-dependent manner. The protein is Estrogen receptor beta (esr2) of Anguilla japonica (Japanese eel).